The chain runs to 323 residues: Methenyltetrahydromethanopterin cyclohydrolase (323 aa).

It belongs to the MCH family.

Its subcellular location is the cytoplasm. The enzyme catalyses 5,10-methenyl-5,6,7,8-tetrahydromethanopterin + H2O = N(5)-formyl-5,6,7,8-tetrahydromethanopterin + H(+). It functions in the pathway one-carbon metabolism; methanogenesis from CO(2); 5,10-methenyl-5,6,7,8-tetrahydromethanopterin from CO(2): step 3/3. In terms of biological role, catalyzes the reversible interconversion of 5-formyl-H(4)MPT to methenyl-H(4)MPT(+). This is Methenyltetrahydromethanopterin cyclohydrolase from Methanococcus maripaludis (strain DSM 14266 / JCM 13030 / NBRC 101832 / S2 / LL).